Consider the following 190-residue polypeptide: Large ribosomal subunit protein bL17 (190 aa).

Residues 128–190 form a disordered region; sequence KKTAGRKAAQ…VEENNEQNKA (63 aa). Low complexity predominate over residues 143–154; it reads ALAPAEETPAPT. The span at 179-190 shows a compositional bias: acidic residues; it reads LAVEENNEQNKA.

The protein belongs to the bacterial ribosomal protein bL17 family. As to quaternary structure, part of the 50S ribosomal subunit. Contacts protein L32.

The sequence is that of Large ribosomal subunit protein bL17 from Salinispora tropica (strain ATCC BAA-916 / DSM 44818 / JCM 13857 / NBRC 105044 / CNB-440).